The sequence spans 408 residues: CCA-adding enzyme (408 aa).

The ATP site is built by Gly-8 and Arg-11. The CTP site is built by Gly-8 and Arg-11. 2 residues coordinate Mg(2+): Glu-21 and Asp-23. The ATP site is built by Arg-91, Arg-137, and Arg-140. CTP-binding residues include Arg-91, Arg-137, and Arg-140. Positions 226-329 constitute an HD domain; the sequence is TGYYTMTTLS…MTLFHVFDCW (104 aa).

Belongs to the tRNA nucleotidyltransferase/poly(A) polymerase family. Bacterial CCA-adding enzyme type 2 subfamily. Mg(2+) is required as a cofactor.

The catalysed reaction is a tRNA precursor + 2 CTP + ATP = a tRNA with a 3' CCA end + 3 diphosphate. It carries out the reaction a tRNA with a 3' CCA end + 2 CTP + ATP = a tRNA with a 3' CCACCA end + 3 diphosphate. Its function is as follows. Catalyzes the addition and repair of the essential 3'-terminal CCA sequence in tRNAs without using a nucleic acid template. Adds these three nucleotides in the order of C, C, and A to the tRNA nucleotide-73, using CTP and ATP as substrates and producing inorganic pyrophosphate. tRNA 3'-terminal CCA addition is required both for tRNA processing and repair. Also involved in tRNA surveillance by mediating tandem CCA addition to generate a CCACCA at the 3' terminus of unstable tRNAs. While stable tRNAs receive only 3'-terminal CCA, unstable tRNAs are marked with CCACCA and rapidly degraded. This Blochmanniella pennsylvanica (strain BPEN) protein is CCA-adding enzyme.